Here is an 81-residue protein sequence, read N- to C-terminus: Probable antitoxin MazE2 (81 aa).

Forms a complex with cognate toxin MazF2.

In terms of biological role, antitoxin component of a type II toxin-antitoxin (TA) system. The chain is Probable antitoxin MazE2 (mazE2) from Mycobacterium tuberculosis (strain ATCC 25618 / H37Rv).